The sequence spans 923 residues: MGSGAGELGRAERLPVLFLFLLSLFCPALCEQIRYRIPEEMPKGSVVGNLATDLGFSVQELPTRKLRVSSEKPYFTVSAESGELLVSSRLDREEICGKKPACALEFEAVAENPLNFYHVNVEIEDINDHTPKFTQNSFELQISESAQPGTRFILGSAHDADIGSNTLQNYQLSPSDHFSLINKEKSDGSKYPEMVLKTPLDREKQKSYHLTLTALDFGAPPLSSTAQIHVLVTDANDNAPVFSQDVYRVSLSENVYPGTTVLQVTATDQDEGVNAEITFSFSEASQITQFDLNSNTGEITVLNTLDFEEVKEYSIVLEARDGGGMIAQCTVEVEVIDENDNAPEVIFQSLPNLIMEDAELGTHIALLKVRDKDSRHNGEVTCKLEGDVPFKILTSSRNTYKLVTDAVLDREQNPEYNITVTATDRGKPPLSSSSSITLHIGDVNDNAPVFSQSSYIVHVAENNPPGASISQVRASDPDLGPNGQVSYCIMASDLEQRELSSYVSISAESGVVFAQRAFDHEQLRAFELTLQARDQGSPALSANVSLRVLVDDRNDNAPRVLYPALGPDGSALFDMVPHAAEPGYLVTKVVAVDADSGHNAWLSYHVLQASEPGLFSLGLRTGEVRTARALGDRDAVRQRLLVAVRDGGQPPLSATATLHLVFADSLQEVLPDITDRPDPSDLQAELQFYLVVALALISVLFLVAMILAIALRLRRSSSPASWSCFQPGLCVKSESVVPPNYSEGTLPYSYNLCVAHTGKTEFNFLKCSEQLSSGQDILCGDSSGALFPLCNSSELTSHQQAPPNTDWRFSQAQRPGTSGSQNGDDTGTWPNNQFDTEMLQAMILASASEAADGSSTLGGGAGTMGLSARYGPQFTLQHVPDYRQNVYIPGSNATLTNAAGKRDGKAPAGGNGNKKKSGKKEKK.

Positions 1 to 30 are cleaved as a signal peptide; it reads MGSGAGELGRAERLPVLFLFLLSLFCPALC. 6 consecutive Cadherin domains span residues 31–133, 134–242, 243–345, 346–450, 451–560, and 568–673; these read EQIR…TPKF, TQNS…APVF, SQDV…APEV, IFQS…APVF, SQSS…APRV, and DGSA…LPDI. The Extracellular portion of the chain corresponds to 31-689; sequence EQIRYRIPEE…SDLQAELQFY (659 aa). Residues N417 and N543 are each glycosylated (N-linked (GlcNAc...) asparagine). The helical transmembrane segment at 690-710 threads the bilayer; that stretch reads LVVALALISVLFLVAMILAIA. At 711–923 the chain is on the cytoplasmic side; sequence LRLRRSSSPA…KKKSGKKEKK (213 aa). Disordered regions lie at residues 797–832 and 893–923; these read SHQQ…WPNN and ATLT…KEKK. A compositionally biased stretch (basic residues) spans 913 to 923; it reads NKKKSGKKEKK.

The protein resides in the cell membrane. Potential calcium-dependent cell-adhesion protein. May be involved in the establishment and maintenance of specific neuronal connections in the brain. This is Protocadherin gamma-B4 (PCDHGB4) from Homo sapiens (Human).